The primary structure comprises 88 residues: Translation initiation factor IF-1 1 (88 aa).

One can recognise an S1-like domain in the interval 1-72 (MAKEELIELD…TKGRINFRHK (72 aa)).

Belongs to the IF-1 family. As to quaternary structure, component of the 30S ribosomal translation pre-initiation complex which assembles on the 30S ribosome in the order IF-2 and IF-3, IF-1 and N-formylmethionyl-tRNA(fMet); mRNA recruitment can occur at any time during PIC assembly.

It is found in the cytoplasm. Its function is as follows. One of the essential components for the initiation of protein synthesis. Stabilizes the binding of IF-2 and IF-3 on the 30S subunit to which N-formylmethionyl-tRNA(fMet) subsequently binds. Helps modulate mRNA selection, yielding the 30S pre-initiation complex (PIC). Upon addition of the 50S ribosomal subunit IF-1, IF-2 and IF-3 are released leaving the mature 70S translation initiation complex. This Burkholderia mallei (strain ATCC 23344) protein is Translation initiation factor IF-1 1.